We begin with the raw amino-acid sequence, 1378 residues long: DNA-directed RNA polymerase subunit beta (1378 aa).

This sequence belongs to the RNA polymerase beta chain family. As to quaternary structure, the RNAP catalytic core consists of 2 alpha, 1 beta, 1 beta' and 1 omega subunit. When a sigma factor is associated with the core the holoenzyme is formed, which can initiate transcription.

The catalysed reaction is RNA(n) + a ribonucleoside 5'-triphosphate = RNA(n+1) + diphosphate. Functionally, DNA-dependent RNA polymerase catalyzes the transcription of DNA into RNA using the four ribonucleoside triphosphates as substrates. This Roseobacter denitrificans (strain ATCC 33942 / OCh 114) (Erythrobacter sp. (strain OCh 114)) protein is DNA-directed RNA polymerase subunit beta.